We begin with the raw amino-acid sequence, 429 residues long: Glucose-6-phosphate isomerase (429 aa).

The Proton donor role is filled by Glu-282. Catalysis depends on residues His-303 and Lys-418.

The protein belongs to the GPI family.

The protein localises to the cytoplasm. It catalyses the reaction alpha-D-glucose 6-phosphate = beta-D-fructose 6-phosphate. It participates in carbohydrate biosynthesis; gluconeogenesis. The protein operates within carbohydrate degradation; glycolysis; D-glyceraldehyde 3-phosphate and glycerone phosphate from D-glucose: step 2/4. In terms of biological role, catalyzes the reversible isomerization of glucose-6-phosphate to fructose-6-phosphate. This chain is Glucose-6-phosphate isomerase, found in Mesomycoplasma hyopneumoniae (strain J / ATCC 25934 / NCTC 10110) (Mycoplasma hyopneumoniae).